The chain runs to 394 residues: Elongation factor Tu (394 aa).

A tr-type G domain is found at 10–204 (LPHVNIGTIG…AVDEYIPTPT (195 aa)). Residues 19 to 26 (GHVDHGKT) form a G1 region. 19 to 26 (GHVDHGKT) lines the GTP pocket. Thr26 provides a ligand contact to Mg(2+). Positions 60-64 (GITIN) are G2. The segment at 81-84 (DCPG) is G3. GTP is bound by residues 81–85 (DCPGH) and 136–139 (NKCD). A G4 region spans residues 136 to 139 (NKCD). The G5 stretch occupies residues 174-176 (SAL).

This sequence belongs to the TRAFAC class translation factor GTPase superfamily. Classic translation factor GTPase family. EF-Tu/EF-1A subfamily. As to quaternary structure, monomer.

The protein resides in the cytoplasm. The enzyme catalyses GTP + H2O = GDP + phosphate + H(+). GTP hydrolase that promotes the GTP-dependent binding of aminoacyl-tRNA to the A-site of ribosomes during protein biosynthesis. The polypeptide is Elongation factor Tu (Mesoplasma florum (strain ATCC 33453 / NBRC 100688 / NCTC 11704 / L1) (Acholeplasma florum)).